We begin with the raw amino-acid sequence, 290 residues long: ATP synthase gamma chain (290 aa).

The protein belongs to the ATPase gamma chain family. As to quaternary structure, F-type ATPases have 2 components, CF(1) - the catalytic core - and CF(0) - the membrane proton channel. CF(1) has five subunits: alpha(3), beta(3), gamma(1), delta(1), epsilon(1). CF(0) has three main subunits: a, b and c.

The protein resides in the cell membrane. Its function is as follows. Produces ATP from ADP in the presence of a proton gradient across the membrane. The gamma chain is believed to be important in regulating ATPase activity and the flow of protons through the CF(0) complex. This Akkermansia muciniphila (strain ATCC BAA-835 / DSM 22959 / JCM 33894 / BCRC 81048 / CCUG 64013 / CIP 107961 / Muc) protein is ATP synthase gamma chain.